The chain runs to 135 residues: Small ribosomal subunit protein uS12 (135 aa).

At Asp-89 the chain carries 3-methylthioaspartic acid. The disordered stretch occupies residues 108–135; sequence NKRTVSRSKYGTKKAKATDKKATDSKKK. Residues 111-122 show a composition bias toward basic residues; that stretch reads TVSRSKYGTKKA. The segment covering 123–135 has biased composition (basic and acidic residues); that stretch reads KATDKKATDSKKK.

It belongs to the universal ribosomal protein uS12 family. Part of the 30S ribosomal subunit. Contacts proteins S8 and S17. May interact with IF1 in the 30S initiation complex.

Its function is as follows. With S4 and S5 plays an important role in translational accuracy. In terms of biological role, interacts with and stabilizes bases of the 16S rRNA that are involved in tRNA selection in the A site and with the mRNA backbone. Located at the interface of the 30S and 50S subunits, it traverses the body of the 30S subunit contacting proteins on the other side and probably holding the rRNA structure together. The combined cluster of proteins S8, S12 and S17 appears to hold together the shoulder and platform of the 30S subunit. The protein is Small ribosomal subunit protein uS12 of Helicobacter pylori (strain HPAG1).